Reading from the N-terminus, the 348-residue chain is Phage-like element PBSX protein XkdT (348 aa).

It belongs to the Mu gp47/PBSX XkdT family.

In Bacillus subtilis (strain 168), this protein is Phage-like element PBSX protein XkdT (xkdT).